We begin with the raw amino-acid sequence, 516 residues long: Multicopper oxidase CueO (516 aa).

Positions 1-28 (MQRRDFLKYSVALGVASALPLWSRAVFA) form a signal peptide, tat-type signal. 2 Plastocyanin-like domains span residues 55–165 (GQST…IEDD) and 227–292 (PRGW…DNKP). Cu cation contacts are provided by His101, His103, His141, and His143. Residues 355–400 (MDPMLDMMGMQMLMEKYGDQAMAGMDHSQMMGHMGHGNMNHMNHGG) form a methionine-rich region region. The 115-residue stretch at 402–516 (FDFHHANKIN…DTGMMLGFTV (115 aa)) folds into the Plastocyanin-like 3 domain. The Cu cation site is built by His443, His446, His448, His499, Cys500, His501, and His505.

The protein belongs to the multicopper oxidase family. In terms of assembly, monomer. Requires Cu cation as cofactor. In terms of processing, exported by the Tat system. The position of the signal peptide cleavage has been experimentally proven.

The protein resides in the periplasm. The catalysed reaction is 4 Cu(+) + O2 + 4 H(+) = 4 Cu(2+) + 2 H2O. With respect to regulation, ferroxidase and phenoloxidase activities are enhanced considerably in the presence of excess copper ions. A labile regulatory copper ion near the T1 copper site is important for the copper associated activation of enzyme activity. Ag(+) acts as a potent inhibitor of oxidase activity by binding at Cu(+) binding sites, blocking Cu(+) substrate binding and oxidation. pPD oxidase activity is strongly inhibited by sodium azide, an inhibitor of the electron transfer. Functionally, multicopper oxidase involved in copper homeostasis and copper tolerance under aerobic conditions. Is responsible for the oxidation of Cu(+) to the less harmful Cu(2+) in the periplasm, thereby preventing Cu(+) from entering the cytoplasm. Probably primarily functions as a cuprous oxidase in vivo. In vitro, in the presence of excess copper ions, exhibits ferroxidase and phenoloxidase activities. Fe(2+) is an excellent substrate in the presence of excess Cu(2+), but is inactive in the absence of Cu(2+). Oxidizes the phenolate iron siderophores enterobactin, 2,3-dihydroxybenzoate (2,3-DHB) and 3-hydroxyanthranilate (3-HAA). Oxidation and thus inactivation of enterobactin could protect cells from the interaction of enterobactin with copper and play a central role as an interface between copper detoxification and iron homeostasis. Also oxidizes a variety of phenolic model substrates, including 2,2'-azinobis(3-ethylbenzthiazolinesulfonic acid) (ABTS), p-phenylenediamine (pPD), 2,6-dimethoxyphenol (2,6-DMP) and 3,4-dihydroxybenzoic acid (3,4-DHB). The chain is Multicopper oxidase CueO from Escherichia coli (strain K12).